The following is a 649-amino-acid chain: Phospholipase A1 PLIP1, chloroplastic (649 aa).

The transit peptide at 1-67 (MAFNTAMAST…NNRILAVSVR (67 aa)) directs the protein to the chloroplast. Positions 420–424 (GHSLG) match the GXSXG motif. The active-site Acyl-ester intermediate is Ser422. Residues Asp483 and His593 each act as charge relay system in the active site.

The protein belongs to the AB hydrolase superfamily. Lipase family.

It localises to the plastid. The protein resides in the chloroplast thylakoid membrane. It carries out the reaction a 1,2-diacyl-sn-glycero-3-phosphocholine + H2O = a 2-acyl-sn-glycero-3-phosphocholine + a fatty acid + H(+). It catalyses the reaction a 1,2-diacyl-3-O-(beta-D-galactosyl)-sn-glycerol + 2 H2O = 3-beta-D-galactosyl-sn-glycerol + 2 a fatty acid + 2 H(+). Sn-1-specific phospholipase A1 involved in seed oil biosynthesis. Hydrolyzes polyunsaturated acyl groups from a unique chloroplast-specific phosphatidylglycerol (PG) that contains 16:1 delta 3-trans as its second acyl group. The polyunsaturated acyl groups released by PLIP1 are exported from the chloroplast, reincorporated into phosphatidylcholine (PC), and ultimately enter seed triacylglycerol (TAG). In vitro, possesses broad substrate specificity. Can hydrolyze the galactolipid monogalactosyldiacylglycerol (MGDG), and the phoshpolipids phosphatidylcholine (PC), phosphatidylethanolamine (PE), phosphatidic acid (PA), phosphatidylserine (PS) phosphatidylglycerol (PG) and phosphatidylinositol (PI). The protein is Phospholipase A1 PLIP1, chloroplastic of Arabidopsis thaliana (Mouse-ear cress).